The primary structure comprises 277 residues: S-formylglutathione hydrolase FrmB (277 aa).

Catalysis depends on charge relay system residues Ser-145, Asp-221, and His-254.

It belongs to the esterase D family.

It catalyses the reaction S-formylglutathione + H2O = formate + glutathione + H(+). Serine hydrolase involved in the detoxification of formaldehyde. Hydrolyzes S-formylglutathione to glutathione and formate. This Escherichia coli O1:K1 / APEC protein is S-formylglutathione hydrolase FrmB (frmB).